We begin with the raw amino-acid sequence, 444 residues long: Orexin receptor type 2 (444 aa).

The segment covering 1-10 (MSGTKLEDSP) has biased composition (basic and acidic residues). The disordered stretch occupies residues 1–20 (MSGTKLEDSPPCRNWSSASE). Topologically, residues 1 to 54 (MSGTKLEDSPPCRNWSSASELNETQEPFLNPTDYDDEEFLRYLWREYLHPKEYE) are extracellular. N-linked (GlcNAc...) asparagine glycosylation is found at Asn-14 and Asn-22. A required for response to orexin-A region spans residues 33 to 49 (DYDDEEFLRYLWREYLH). A helical transmembrane segment spans residues 55-75 (WVLIAGYIIVFVVALIGNVLV). The Cytoplasmic portion of the chain corresponds to 76–88 (CVAVWKNHHMRTV). The chain crosses the membrane as a helical span at residues 89–110 (TNYFIVNLSLADVLVTITCLPA). Residues 111–127 (TLVVDITETWFFGQSLC) lie on the Extracellular side of the membrane. Cys-127 and Cys-210 are joined by a disulfide. Residues 128–150 (KVIPYLQTVSVSVSVLTLSCIAL) traverse the membrane as a helical segment. Residues 151-170 (DRWYAICHPLMFKSTAKRAR) lie on the Cytoplasmic side of the membrane. Residues 171-191 (NSIVIIWIVSCIIMIPQAIVM) form a helical membrane-spanning segment. Residues 192 to 222 (ECSTVFPGLANKTTLFTVCDERWGGEIYPKM) are Extracellular-facing. N-linked (GlcNAc...) asparagine glycosylation is present at Asn-202. A helical membrane pass occupies residues 223 to 243 (YHICFFLVTYMAPLCLMVLAY). Over 244 to 304 (LQIFRKLWCR…QIRARRKTAR (61 aa)) the chain is Cytoplasmic. The helical transmembrane segment at 305–326 (MLMIVLLVFAICYLPISILNVL) threads the bilayer. Asn-324 provides a ligand contact to suvorexant. Over 327–342 (KRVFGMFAHTEDRETV) the chain is Extracellular. The helical transmembrane segment at 343–366 (YAWFTFSHWLVYANSAANPIIYNF) threads the bilayer. Residues 367 to 444 (LSGKFREEFK…ANGAGPLQNW (78 aa)) are Cytoplasmic-facing.

Belongs to the G-protein coupled receptor 1 family.

It localises to the cell membrane. Functionally, nonselective, high-affinity receptor for both orexin-A and orexin-B neuropeptides. Triggers an increase in cytoplasmic Ca(2+) levels in response to orexin-A binding. The protein is Orexin receptor type 2 (HCRTR2) of Homo sapiens (Human).